The sequence spans 175 residues: Methylmalonyl-CoA epimerase, mitochondrial (175 aa).

The transit peptide at 1-35 (MARVLKVAAASAAGLFPRLRTPVSTVRTSASLSSH) directs the protein to the mitochondrion. In terms of domain architecture, VOC spans 46 to 175 (RLNHVAVAVP…GGVLVELEQA (130 aa)). A Co(2+)-binding site is contributed by H49. The residue at position 113 (K113) is an N6-succinyllysine. H121 contributes to the Co(2+) binding site. N6-acetyllysine; alternate is present on K149. The residue at position 149 (K149) is an N6-succinyllysine; alternate. E171 contacts Co(2+).

It belongs to the methylmalonyl-CoA epimerase family.

The protein localises to the mitochondrion. It carries out the reaction (R)-methylmalonyl-CoA = (S)-methylmalonyl-CoA. Functionally, methylmalonyl-CoA epimerase involved in propionyl-CoA metabolism. The chain is Methylmalonyl-CoA epimerase, mitochondrial (MCEE) from Bos taurus (Bovine).